A 534-amino-acid polypeptide reads, in one-letter code: NAD(P)H-quinone oxidoreductase chain 4 (534 aa).

14 consecutive transmembrane segments (helical) span residues 6–26 (FPWLSTLIFFPIMATVALPFI), 38–58 (WYALVIGLIDFVLLIYAFYTQ), 91–111 (MPLILLTGFITSLAILASWPV), 117–137 (LFYFLILAMYGGQIAVFAVQD), 138–158 (LLVFFLVWELELVPVYLLLSI), 171–191 (FILYTAISSLFILVAALAMAF), 214–234 (LLCYTGFLVAFAVKLPIVPLH), 245–265 (TAPVHMLLAGILLKMGGYALI), 279–299 (FAPALIILGVVNIIYAALTSF), 316–336 (MGFVLIGIASFTDLGMSGAVL), 337–357 (QMVSHGLIGASLFFLVGATYD), 377–399 (IFAMFTTCSMASLALPGMSGFVA), 419–439 (VPVVILAGIGVILTPIYLLSM), and 466–486 (IFVIACLLVPIIGIGLYPKII).

Belongs to the complex I subunit 4 family.

The protein localises to the cellular thylakoid membrane. It catalyses the reaction a plastoquinone + NADH + (n+1) H(+)(in) = a plastoquinol + NAD(+) + n H(+)(out). It carries out the reaction a plastoquinone + NADPH + (n+1) H(+)(in) = a plastoquinol + NADP(+) + n H(+)(out). Functionally, NDH-1 shuttles electrons from NAD(P)H, via FMN and iron-sulfur (Fe-S) centers, to quinones in the respiratory chain. The immediate electron acceptor for the enzyme in this species is believed to be plastoquinone. Couples the redox reaction to proton translocation (for every two electrons transferred, four hydrogen ions are translocated across the cytoplasmic membrane), and thus conserves the redox energy in a proton gradient. The protein is NAD(P)H-quinone oxidoreductase chain 4 of Acaryochloris marina (strain MBIC 11017).